The following is a 64-amino-acid chain: Small ribosomal subunit protein eS17 (64 aa).

Belongs to the eukaryotic ribosomal protein eS17 family.

This is Small ribosomal subunit protein eS17 from Halorubrum lacusprofundi (strain ATCC 49239 / DSM 5036 / JCM 8891 / ACAM 34).